Here is a 317-residue protein sequence, read N- to C-terminus: Apolipoprotein E (317 aa).

The N-terminal stretch at 1-18 (MKVLWAALLVTFLAGCQA) is a signal peptide. 8 repeat units span residues 80–101 (ALMD…EQLT), 102–123 (PVAE…ARLG), 124–145 (ADME…AMLG), 146–167 (QSTE…KRLL), 168–189 (RDAD…EGAE), 190–211 (RGVS…VRAA), 212–233 (TVGS…ERLR), and 234–255 (ARME…EQVA). The 8 X 22 AA approximate tandem repeats stretch occupies residues 80 to 255 (ALMDETMKEL…RLDEVKEQVA (176 aa)). Residue Met-143 is modified to Methionine sulfoxide. Ser-147 carries the phosphoserine modification. The LDL and other lipoprotein receptors binding stretch occupies residues 158–168 (HLRKLRKRLLR). 162-165 (LRKR) contacts heparin. Positions 210–290 (AATVGSVAGK…SWFEPLVEDM (81 aa)) are lipid-binding and lipoprotein association. 229–236 (GERLRARM) is a heparin binding site. The homooligomerization stretch occupies residues 266 to 317 (QQIRLQAEAFQARLKSWFEPLVEDMQRQWAGLVEKVQAAVGTSAAPVPSDNH). Residues 278-290 (RLKSWFEPLVEDM) are specificity for association with VLDL.

Belongs to the apolipoprotein A1/A4/E family. In terms of assembly, homotetramer. May interact with ABCA1; functionally associated with ABCA1 in the biogenesis of HDLs. May interact with APP/A4 amyloid-beta peptide; the interaction is extremely stable in vitro but its physiological significance is unclear. May interact with MAPT. May interact with MAP2. In the cerebrospinal fluid, interacts with secreted SORL1. Interacts with PMEL; this allows the loading of PMEL luminal fragment on ILVs to induce fibril nucleation. Post-translationally, APOE exists as multiple glycosylated and sialylated glycoforms within cells and in plasma. The extent of glycosylation and sialylation are tissue and context specific. In terms of processing, glycated in plasma VLDL. Phosphorylated by FAM20C in the extracellular medium.

The protein localises to the secreted. The protein resides in the extracellular space. It localises to the extracellular matrix. It is found in the extracellular vesicle. Its subcellular location is the endosome. The protein localises to the multivesicular body. APOE is an apolipoprotein, a protein associating with lipid particles, that mainly functions in lipoprotein-mediated lipid transport between organs via the plasma and interstitial fluids. APOE is a core component of plasma lipoproteins and is involved in their production, conversion and clearance. Apolipoproteins are amphipathic molecules that interact both with lipids of the lipoprotein particle core and the aqueous environment of the plasma. As such, APOE associates with chylomicrons, chylomicron remnants, very low density lipoproteins (VLDL) and intermediate density lipoproteins (IDL) but shows a preferential binding to high-density lipoproteins (HDL). It also binds a wide range of cellular receptors including the LDL receptor/LDLR, the LDL receptor-related proteins LRP1, LRP2 and LRP8 and the very low-density lipoprotein receptor/VLDLR that mediate the cellular uptake of the APOE-containing lipoprotein particles. Finally, APOE also has a heparin-binding activity and binds heparan-sulfate proteoglycans on the surface of cells, a property that supports the capture and the receptor-mediated uptake of APOE-containing lipoproteins by cells. A main function of APOE is to mediate lipoprotein clearance through the uptake of chylomicrons, VLDLs, and HDLs by hepatocytes. APOE is also involved in the biosynthesis by the liver of VLDLs as well as their uptake by peripheral tissues ensuring the delivery of triglycerides and energy storage in muscle, heart and adipose tissues. By participating in the lipoprotein-mediated distribution of lipids among tissues, APOE plays a critical role in plasma and tissues lipid homeostasis. APOE is also involved in two steps of reverse cholesterol transport, the HDLs-mediated transport of cholesterol from peripheral tissues to the liver, and thereby plays an important role in cholesterol homeostasis. First, it is functionally associated with ABCA1 in the biogenesis of HDLs in tissues. Second, it is enriched in circulating HDLs and mediates their uptake by hepatocytes. APOE also plays an important role in lipid transport in the central nervous system, regulating neuron survival and sprouting. This chain is Apolipoprotein E (APOE), found in Pongo pygmaeus (Bornean orangutan).